We begin with the raw amino-acid sequence, 250 residues long: Sulfate transporter CysZ (250 aa).

4 helical membrane-spanning segments follow: residues 26–46, 71–91, 150–170, and 211–231; these read LFVL…IYLA, ILWP…FTML, LFIL…WLLF, and IVYL…AAVA.

Belongs to the CysZ family.

The protein localises to the cell inner membrane. High affinity, high specificity proton-dependent sulfate transporter, which mediates sulfate uptake. Provides the sulfur source for the cysteine synthesis pathway. This chain is Sulfate transporter CysZ, found in Pseudomonas fluorescens (strain Pf0-1).